Reading from the N-terminus, the 215-residue chain is Pyrrolidone-carboxylate peptidase (215 aa).

Catalysis depends on residues glutamate 78, cysteine 141, and histidine 165.

This sequence belongs to the peptidase C15 family. In terms of assembly, homotetramer.

The protein localises to the cytoplasm. It catalyses the reaction Release of an N-terminal pyroglutamyl group from a polypeptide, the second amino acid generally not being Pro.. Functionally, removes 5-oxoproline from various penultimate amino acid residues except L-proline. This Streptococcus pyogenes serotype M12 (strain MGAS2096) protein is Pyrrolidone-carboxylate peptidase.